We begin with the raw amino-acid sequence, 254 residues long: Small ribosomal subunit protein uS2 (254 aa).

The protein belongs to the universal ribosomal protein uS2 family.

The sequence is that of Small ribosomal subunit protein uS2 from Legionella pneumophila subsp. pneumophila (strain Philadelphia 1 / ATCC 33152 / DSM 7513).